Here is a 340-residue protein sequence, read N- to C-terminus: Galactoside alpha-(1,2)-fucosyltransferase 2 (340 aa).

Residues 1–7 (MLSMQAS) are Cytoplasmic-facing. Residues 8 to 28 (FFFPTGPFILFVFTASTIFHL) traverse the membrane as a helical; Signal-anchor for type II membrane protein segment. Residues 29-340 (QQRMVKIQPT…EADLSPLLKH (312 aa)) lie on the Lumenal side of the membrane. 4 N-linked (GlcNAc...) asparagine glycosylation sites follow: N185, N251, N279, and N305.

It localises to the golgi apparatus. It is found in the golgi stack membrane. The catalysed reaction is a beta-D-galactosyl-(1-&gt;3)-N-acetyl-beta-D-glucosaminyl derivative + GDP-beta-L-fucose = an alpha-L-Fuc-(1-&gt;2)-beta-D-Gal-(1-&gt;3)-beta-D-GlcNAc derivative + GDP + H(+). It carries out the reaction a beta-D-galactosyl-(1-&gt;4)-N-acetyl-beta-D-glucosaminyl derivative + GDP-beta-L-fucose = an alpha-L-Fuc-(1-&gt;2)-beta-D-Gal-(1-&gt;4)-beta-D-GlcNAc derivative + GDP + H(+). It catalyses the reaction a neolactoside nLc4Cer + GDP-beta-L-fucose = a neolactoside IV(2)-alpha-Fuc-nLc4Cer + GDP + H(+). The enzyme catalyses a neolactoside nLc4Cer(d18:1(4E)) + GDP-beta-L-fucose = a neolactoside IV(2)-alpha-Fuc-nLc4Cer(d18:1(4E)) + GDP + H(+). The catalysed reaction is a ganglioside GM1 + GDP-beta-L-fucose = a ganglioside Fuc-GM1 + GDP + H(+). It carries out the reaction a ganglioside GA1 + GDP-beta-L-fucose = a ganglioside Fuc-GA1 + GDP + H(+). It catalyses the reaction Lc4Cer + GDP-beta-L-fucose = alpha-L-fucosyl-(1-&gt;2)-beta-D-galactosyl-(1-&gt;3)-N-acetyl-beta-D-glucosaminyl-(1-&gt;3)-beta-D-galactosyl-(1-&gt;4)-beta-D-glucosyl-(1&lt;-&gt;1')-ceramide + GDP + H(+). The enzyme catalyses a beta-D-Gal-(1-&gt;3)-beta-D-GlcNAc-(1-&gt;3)-beta-D-Gal-(1-&gt;4)-beta-D-Glc-(1&lt;-&gt;1')-Cer(d18:1(4E)) + GDP-beta-L-fucose = alpha-L-fucosyl-(1-&gt;2)- beta-D-galactosyl-(1-&gt;3)-N-acetyl-beta-D-glucosaminyl-(1-&gt;3)-beta-D-galactosyl-(1-&gt;4)-beta-D-glucosyl-(1&lt;-&gt;1')-N-acylsphing-4-enine + GDP + H(+). The catalysed reaction is a ganglioside GD1b + GDP-beta-L-fucose = a ganglioside Fuc-GD1b + GDP + H(+). It carries out the reaction a ganglioside GM1 (d18:1(4E)) + GDP-beta-L-fucose = a ganglioside Fuc-GM1 (d18:1(4E)) + GDP + H(+). It catalyses the reaction a globoside GalGb4Cer (d18:1(4E)) + GDP-beta-L-fucose = a globoside Globo-H (d18:1(4E)) + GDP + H(+). The enzyme catalyses a lactoside III(4)-a-Fuc-Lc4Cer + GDP-beta-L-fucose = a lactoside IV(2),III(4)-a-[Fuc]2-Lc4Cer + GDP + H(+). The catalysed reaction is beta-D-galactosyl-(1-&gt;3)-N-acetyl-D-galactosamine + GDP-beta-L-fucose = alpha-L-fucosyl-(1-&gt;2)-beta-D-galactosyl-(1-&gt;3)-N-acetyl-D-galactosamine + GDP + H(+). Its pathway is protein modification; protein glycosylation. Catalyzes the transfer of L-fucose, from a guanosine diphosphate-beta-L-fucose, to the terminal galactose on both O- and N-linked glycans chains of cell surface glycoproteins and glycolipids and the resulting epitope regulates several processes such as cell-cell interaction including host-microbe interaction, cell surface expression and cell proliferation. Preferentially fucosylates gangliosides GA1 and GM1 in the antrum, cecum and colon and in the female reproductive organs. Fucosylated host glycoproteins or glycolipids mediate interaction with intestinal microbiota influencing its composition. Creates a soluble precursor oligosaccharide FuC-alpha ((1,2)Galbeta-) called the H antigen which is an essential substrate for the final step in the soluble ABO blood group antigen synthesis pathway. This chain is Galactoside alpha-(1,2)-fucosyltransferase 2, found in Sus scrofa (Pig).